Consider the following 325-residue polypeptide: Homocysteine S-methyltransferase 2 (325 aa).

The Hcy-binding domain occupies 6–321; sequence LKQFLADNPK…KDIQEISAAV (316 aa). Phosphothreonine is present on T138. 3 residues coordinate Zn(2+): C239, C306, and C307.

Requires Zn(2+) as cofactor.

It is found in the cytoplasm. The protein resides in the nucleus. The catalysed reaction is S-methyl-L-methionine + L-homocysteine = 2 L-methionine + H(+). Functionally, homocysteine S-methyltransferase involved in the conversion of S-adenosylmethionine (AdoMet) to methionine to control the methionine/AdoMet ratio. Also converts S-methylmethionine (SMM) to methionine. The sequence is that of Homocysteine S-methyltransferase 2 (SAM4) from Saccharomyces cerevisiae (strain ATCC 204508 / S288c) (Baker's yeast).